Here is a 346-residue protein sequence, read N- to C-terminus: Sensor histidine kinase GraS (346 aa).

The next 2 membrane-spanning stretches (helical) occupy residues 15 to 35 and 43 to 63; these read MNWIFWILFLNLLMLGISLID and LFYIVSLNLSLTMIFLILTYF. One can recognise a Histidine kinase domain in the interval 126-332; it reads EFVHDIKTPV…TVRLIFPLQN (207 aa).

As to quaternary structure, interacts with GraX.

The protein localises to the cell membrane. It carries out the reaction ATP + protein L-histidine = ADP + protein N-phospho-L-histidine.. Member of the two-component regulatory system GraR/GraS involved in resistance against cationic antimicrobial peptides (CAMPs). Functions as a sensor protein kinase which phosphorylates GraR through the auxiliary protein GraX. In turn, GraR up-regulates many genes such as adhesins, exoproteins, transporters, toxins, and proteins involved in cell wall synthesis. Down-regulates the expression of many genes involved in RNA and amino acid synthesis or glycolysis. This is Sensor histidine kinase GraS (graS) from Staphylococcus aureus (strain Mu50 / ATCC 700699).